The primary structure comprises 383 residues: Probable purine permease 16 (383 aa).

A run of 10 helical transmembrane segments spans residues 30 to 50, 72 to 92, 113 to 133, 138 to 158, 166 to 186, 203 to 223, 247 to 267, 297 to 317, 322 to 342, and 346 to 363; these read ISVF…MLLL, WTQA…FFIL, VLSL…LYAL, VGWG…SAFI, WIII…PAFA, LILI…QLGF, ICVS…SGEF, VWAV…ADVV, SPVV…EFGW, and GALL…YSLH.

Belongs to the purine permeases (TC 2.A.7.14) family.

It is found in the membrane. The polypeptide is Probable purine permease 16 (PUP16) (Arabidopsis thaliana (Mouse-ear cress)).